Consider the following 177-residue polypeptide: Translation initiation factor IF-3 (177 aa).

The protein belongs to the IF-3 family. Monomer.

It localises to the cytoplasm. In terms of biological role, IF-3 binds to the 30S ribosomal subunit and shifts the equilibrium between 70S ribosomes and their 50S and 30S subunits in favor of the free subunits, thus enhancing the availability of 30S subunits on which protein synthesis initiation begins. The chain is Translation initiation factor IF-3 from Acaryochloris marina (strain MBIC 11017).